The following is a 315-amino-acid chain: Ribosomal RNA small subunit methyltransferase H (315 aa).

Residues 37-39, aspartate 57, tyrosine 84, aspartate 105, and glutamine 112 each bind S-adenosyl-L-methionine; that span reads AGH.

The protein belongs to the methyltransferase superfamily. RsmH family.

It localises to the cytoplasm. The catalysed reaction is cytidine(1402) in 16S rRNA + S-adenosyl-L-methionine = N(4)-methylcytidine(1402) in 16S rRNA + S-adenosyl-L-homocysteine + H(+). Specifically methylates the N4 position of cytidine in position 1402 (C1402) of 16S rRNA. This is Ribosomal RNA small subunit methyltransferase H from Lachnospira eligens (strain ATCC 27750 / DSM 3376 / VPI C15-48 / C15-B4) (Eubacterium eligens).